The following is a 416-amino-acid chain: MLEQMGIAAKAASYKLALLSSGEKNRVLEKIADELEAQMESILSANVQDVEQARANGLSEAMLDRLALTPARLKAIADDVRQVCNLADPVGQVIDGGLLDSGLRLERRRVPLGVVGVIYEARPNVTVDVASLCLKTGNAVILRGGKETHRTNAATVRVIQKALKACGLPEAAVQAIDNPDRSLVNEMLRMDKYIDMLIPRGGAGLHKLCREQSTIPVITGGIGVCHIFVDSSADIAPALKIIVNAKTQRPSTCNTVETLLVHQDIAERFLPALSKQMAESGVTLHGDETVMQALHGPAKLVPLKPEELDNEFLSLDLNVVVVENMDGAIAHIREHGTQHSDAILTSDMHNAARFVNEVDSAAVYVNASTRFTDGGQFGLGAEVAVSTQKLHARGPMGLEALTTYKWIGFGDGTIRA.

It belongs to the gamma-glutamyl phosphate reductase family.

It is found in the cytoplasm. It carries out the reaction L-glutamate 5-semialdehyde + phosphate + NADP(+) = L-glutamyl 5-phosphate + NADPH + H(+). It functions in the pathway amino-acid biosynthesis; L-proline biosynthesis; L-glutamate 5-semialdehyde from L-glutamate: step 2/2. Its function is as follows. Catalyzes the NADPH-dependent reduction of L-glutamate 5-phosphate into L-glutamate 5-semialdehyde and phosphate. The product spontaneously undergoes cyclization to form 1-pyrroline-5-carboxylate. The polypeptide is Gamma-glutamyl phosphate reductase (Salmonella paratyphi C (strain RKS4594)).